The primary structure comprises 269 residues: Imidazoleglycerol-phosphate dehydratase 1, chloroplastic (269 aa).

Disordered stretches follow at residues 1–31 and 54–73; these read MTTAPFVSPSLPRLHSARASPFPKPSVGSGG and SGVGGNGSPMAPEESTVSSR. Residues 1–52 constitute a chloroplast transit peptide; it reads MTTAPFVSPSLPRLHSARASPFPKPSVGSGGGVAFPARTYGSSLRLRSAVMS. Substrate is bound by residues Glu-83, 109–117, 135–139, Arg-161, and Arg-183; these read HMLDQLASH and HHSNE. Positions 109, 135, 136, and 139 each coordinate Mn(2+). His-207, His-231, His-232, and Glu-235 together coordinate Mn(2+). Residues 231–239 and 261–263 each bind substrate; these read HHIIEATFK and SSK.

It belongs to the imidazoleglycerol-phosphate dehydratase family. Requires Mn(2+) as cofactor.

The protein localises to the plastid. The protein resides in the chloroplast. The enzyme catalyses D-erythro-1-(imidazol-4-yl)glycerol 3-phosphate = 3-(imidazol-4-yl)-2-oxopropyl phosphate + H2O. It functions in the pathway amino-acid biosynthesis; L-histidine biosynthesis; L-histidine from 5-phospho-alpha-D-ribose 1-diphosphate: step 6/9. This Triticum aestivum (Wheat) protein is Imidazoleglycerol-phosphate dehydratase 1, chloroplastic.